A 1116-amino-acid polypeptide reads, in one-letter code: ELKS/Rab6-interacting/CAST family member 1 (1116 aa).

Residues 1–54 (MYGSARSVGKVEPSSQSPGRSPRLPRSPRLGHRRTNSTGGSSGSSVGGGSGKTL) are disordered. Residue Lys10 is modified to N6-acetyllysine. Residues 13–28 (PSSQSPGRSPRLPRSP) show a composition bias toward low complexity. 3 positions are modified to phosphoserine: Ser17, Ser21, and Ser37. Thr38 is subject to Phosphothreonine. Positions 40–51 (GSSGSSVGGGSG) are enriched in gly residues. Phosphoserine occurs at positions 55, 75, and 94. Residues 144 to 988 (RQARDNTIMD…RMKLMADNYE (845 aa)) are a coiled coil. Positions 590–602 (KEKQMSSLKERVK) are enriched in basic and acidic residues. 2 disordered regions span residues 590–609 (KEKQ…ADTT) and 814–836 (ARRR…RKKD). Ser1005 is modified (phosphoserine). The residue at position 1046 (Thr1046) is a Phosphothreonine. In terms of domain architecture, FIP-RBD spans 1046–1108 (TPPASYNLDD…DHCPDILEQV (63 aa)). Positions 1060–1100 (WENELQKMTRGQLQDELEKGERDNAELQEFANAILQQIADH) form a coiled coil.

As to quaternary structure, part of a complex with CHUK, IKBKB and IKBKG. Interacts with CHUK, IKBKB and IKBKG. The interaction with IKBKG is independent of CHUK and IKBKB. Interacts with NFKBIA. Isoform 4 interacts with PPFIA1, and through its C-terminus with the PDZ domains of RIMS1 and RIMS2. Interacts with ERC2/CAST1. Interacts with the GTB-bound forms of RAB6A isoform 1 and isoform 2 and with RAB6B. The interaction was strongest with RAB6B, followed by RAB6A isoform 2 and weakest with RAB6A isoform 1. Interacts with SDCCAG8. Part of a cortical microtubule stabilization complex (CMSC) composed of KANK1, PPFIA1, PPFIBP1, ERC1/ELKS, PHLDB2/LL5beta, CLASPs, KIF21A and possibly additional interactors; within CMSCs KANK1 and PHLDB2/LL5beta appear to be the core components for targeting of microtubule-binding proteins KIF21A and CLASPs, whereas PPFIA1, PPFIBP1 and ERC1/ELKS serve as scaffolds for protein clustering. In terms of tissue distribution, widely expressed. Isoform 2 and isoform 4 are abundantly expressed in brain. Isoform 1 and isoform 3 are predominantly expressed in testis and thyroid, and isoform 1 predominates in other tissues tested.

The protein resides in the cytoplasm. The protein localises to the cytoskeleton. It localises to the microtubule organizing center. Its subcellular location is the centrosome. It is found in the membrane. The protein resides in the golgi apparatus membrane. The protein localises to the presynaptic cell membrane. It localises to the cell projection. Its subcellular location is the podosome. Its function is as follows. Regulatory subunit of the IKK complex. Probably recruits IkappaBalpha/NFKBIA to the complex. May be involved in the organization of the cytomatrix at the nerve terminals active zone (CAZ) which regulates neurotransmitter release. May be involved in vesicle trafficking at the CAZ. May be involved in Rab-6 regulated endosomes to Golgi transport. This is ELKS/Rab6-interacting/CAST family member 1 (ERC1) from Homo sapiens (Human).